We begin with the raw amino-acid sequence, 302 residues long: Ornithine carbamoyltransferase (302 aa).

Residues 47–50 (STRT), Gln-74, Arg-98, and 125–128 (HPCQ) contribute to the carbamoyl phosphate site. L-ornithine is bound by residues Asn-156, Asp-220, and 224 to 225 (SM). Residues 260–261 (CL) and Arg-288 each bind carbamoyl phosphate.

The protein belongs to the aspartate/ornithine carbamoyltransferase superfamily. OTCase family.

The protein localises to the cytoplasm. It carries out the reaction carbamoyl phosphate + L-ornithine = L-citrulline + phosphate + H(+). The protein operates within amino-acid biosynthesis; L-arginine biosynthesis; L-arginine from L-ornithine and carbamoyl phosphate: step 1/3. In terms of biological role, reversibly catalyzes the transfer of the carbamoyl group from carbamoyl phosphate (CP) to the N(epsilon) atom of ornithine (ORN) to produce L-citrulline. This chain is Ornithine carbamoyltransferase, found in Methanosphaera stadtmanae (strain ATCC 43021 / DSM 3091 / JCM 11832 / MCB-3).